The chain runs to 487 residues: GTPase Der (487 aa).

2 consecutive EngA-type G domains span residues 3–166 (PVVA…AEAM) and 199–372 (IKLA…DSAT). GTP is bound by residues 9 to 16 (GRPNVGKS), 56 to 60 (DTGGI), 118 to 121 (NKID), 205 to 212 (GKPNVGKS), 252 to 256 (DTAGV), and 317 to 320 (NKWD). The KH-like domain maps to 373–457 (RRVSTSMLTR…PIQLRFQEGD (85 aa)).

Belongs to the TRAFAC class TrmE-Era-EngA-EngB-Septin-like GTPase superfamily. EngA (Der) GTPase family. Associates with the 50S ribosomal subunit.

In terms of biological role, GTPase that plays an essential role in the late steps of ribosome biogenesis. The chain is GTPase Der from Shewanella oneidensis (strain ATCC 700550 / JCM 31522 / CIP 106686 / LMG 19005 / NCIMB 14063 / MR-1).